Here is a 372-residue protein sequence, read N- to C-terminus: Cytochrome b (372 aa).

The next 4 membrane-spanning stretches (helical) occupy residues 25–45 (FGSMLLTCLALQTLTGFFLAI), 69–90 (WIMQNMHAIGASMFFICIYTHI), 105–125 (WLSGTALLIVLMATAFFGYVL), and 170–190 (FFALHFILPFLIISLSSIHIM). H75 and H89 together coordinate heme b. Positions 174 and 188 each coordinate heme b. H193 is a binding site for a ubiquinone. 4 helical membrane passes run 218–238 (YKDMFIITTMIATLFIIMSFM), 280–300 (LGGTMALLMSVLILTTMPFTH), 312–332 (ITQVVFWTFIATFITITWTAT), and 339–358 (FILISQMASSMYFLFFIIHP).

Belongs to the cytochrome b family. In terms of assembly, the cytochrome bc1 complex contains 3 respiratory subunits (MT-CYB, CYC1 and UQCRFS1), 2 core proteins (UQCRC1 and UQCRC2) and probably 6 low-molecular weight proteins. Heme b serves as cofactor.

The protein resides in the mitochondrion inner membrane. In terms of biological role, component of the ubiquinol-cytochrome c reductase complex (complex III or cytochrome b-c1 complex) that is part of the mitochondrial respiratory chain. The b-c1 complex mediates electron transfer from ubiquinol to cytochrome c. Contributes to the generation of a proton gradient across the mitochondrial membrane that is then used for ATP synthesis. The protein is Cytochrome b (MT-CYB) of Pseudechis australis (Mulga snake).